A 162-amino-acid chain; its full sequence is Caveolin-2 (162 aa).

The Cytoplasmic segment spans residues 1–86 (MGLETEKADA…FEVSKYLIYK (86 aa)). At Tyr-19 the chain carries Phosphotyrosine; by SRC. Residues 19-40 (YSRHSGLGYPEPEKCAKSTQDR) are disordered. A phosphoserine mark is found at Ser-20 and Ser-23. Tyr-27 carries the phosphotyrosine; by SRC modification. Positions 29–40 (EPEKCAKSTQDR) are enriched in basic and acidic residues. Ser-36 is subject to Phosphoserine. Residues 87–107 (VLTVLLAIPLAFVAGILFATL) constitute an intramembrane region (helical). The Cytoplasmic segment spans residues 108-162 (SCLHIWIVVPFVKTCLMVLPSVQTVWHSITDGFIAPLYKSMGLIFSSISLRLSPE).

Belongs to the caveolin family. As to quaternary structure, monomer or homodimer. Interacts with CAV1; the interaction forms a stable heterooligomeric complex that is required for targeting to lipid rafts and for caveolae formation. Tyrosine phosphorylated forms do not form heterooligomers with the Tyr-19-phosphorylated form existing as a monomer or dimer, and the Tyr-27-form as a monomer only. Interacts (tyrosine phosphorylated form) with the SH2 domain-containing proteins, RASA1, NCK1 and SRC. Interacts (tyrosine phosphorylated form) with INSR, the interaction (Tyr-27-phosphorylated form) is increased on insulin stimulation. Interacts (Tyr-19 phosphorylated form) with MAPK1 (phosphorylated form); the interaction, promoted by insulin, leads to nuclear location and MAPK1 activation. Interacts with STAT3; the interaction is increased on insulin-induced tyrosine phosphorylation leading to STAT activation. In terms of processing, phosphorylated on serine and tyrosine residues. CAV1 promotes phosphorylation on Ser-23 which then targets the complex to the plasma membrane, lipid rafts and caveolae. Phosphorylation on Ser-36 appears to modulate mitosis in endothelial cells. Phosphorylation on both Tyr-19 and Tyr-27 is required for insulin-induced 'Ser-727' phosphorylation of STAT3 and its activation. Phosphorylation on Tyr-19 is required for insulin-induced phosphorylation of MAPK1 and DNA binding of STAT3. Tyrosine phosphorylation is induced by both EGF and insulin (By. similarity).

The protein localises to the nucleus. It is found in the cytoplasm. The protein resides in the golgi apparatus membrane. Its subcellular location is the cell membrane. It localises to the membrane. The protein localises to the caveola. Its function is as follows. May act as a scaffolding protein within caveolar membranes. Interacts directly with G-protein alpha subunits and can functionally regulate their activity. Acts as an accessory protein in conjunction with CAV1 in targeting to lipid rafts and driving caveolae formation. The Ser-36 phosphorylated form has a role in modulating mitosis in endothelial cells. Positive regulator of cellular mitogenesis of the MAPK signaling pathway. Required for the insulin-stimulated nuclear translocation and activation of MAPK1 and STAT3, and the subsequent regulation of cell cycle progression. This is Caveolin-2 (CAV2) from Didelphis virginiana (North American opossum).